Reading from the N-terminus, the 161-residue chain is MIHFVLLVSRQGKVRLTKWYSPYTQKERSKVIRELSGVILNRGPKLCNFIEWRGYKVVYKRYASLYFCMCIDEADNELEVLEIIHHYVEILDRYFGSVCELDLIFNFHKAYYILDELLIAGELQESSKKTVARIISAQDQLVEVAKEEASSISNIIAQATK.

Belongs to the adaptor complexes small subunit family. In terms of assembly, adaptor protein complex 1 (AP-1) is a heterotetramer composed of two large adaptins (gamma-type subunit and beta-type subunit), a medium adaptin (mu-type subunit) and a small adaptin (sigma-type subunit). Expressed in seedlings, roots, stems, leaves, flowers and siliques (developing fruits and seeds).

It is found in the golgi apparatus. Its subcellular location is the cytoplasmic vesicle. It localises to the clathrin-coated vesicle membrane. Functionally, subunit of clathrin-associated adaptor protein complex 1 that plays a role in protein sorting at the trans-Golgi network and early endosomes (TGN/EE). The AP complexes mediate the recruitment of clathrin to membranes and the recognition of sorting signals within the cytosolic tails of transmembrane cargo molecules. This is AP-1 complex subunit sigma-1 (AAP19-1) from Arabidopsis thaliana (Mouse-ear cress).